The chain runs to 99 residues: Integration host factor subunit alpha (99 aa).

Belongs to the bacterial histone-like protein family. As to quaternary structure, heterodimer of an alpha and a beta chain.

Functionally, this protein is one of the two subunits of integration host factor, a specific DNA-binding protein that functions in genetic recombination as well as in transcriptional and translational control. In Enterobacter sp. (strain 638), this protein is Integration host factor subunit alpha.